A 274-amino-acid polypeptide reads, in one-letter code: Dermonecrotic toxin LspiSicTox-betaIII1 G (274 aa).

His-5 is an active-site residue. Mg(2+)-binding residues include Glu-25 and Asp-27. The active-site Nucleophile is His-41. Cystine bridges form between Cys-45-Cys-51 and Cys-47-Cys-189. Residue Asn-66 is glycosylated (N-linked (GlcNAc...) asparagine). Asp-85 is a binding site for Mg(2+).

This sequence belongs to the arthropod phospholipase D family. Class II subfamily. Mg(2+) serves as cofactor. As to expression, expressed by the venom gland.

It is found in the secreted. It catalyses the reaction an N-(acyl)-sphingosylphosphocholine = an N-(acyl)-sphingosyl-1,3-cyclic phosphate + choline. The enzyme catalyses an N-(acyl)-sphingosylphosphoethanolamine = an N-(acyl)-sphingosyl-1,3-cyclic phosphate + ethanolamine. It carries out the reaction a 1-acyl-sn-glycero-3-phosphocholine = a 1-acyl-sn-glycero-2,3-cyclic phosphate + choline. The catalysed reaction is a 1-acyl-sn-glycero-3-phosphoethanolamine = a 1-acyl-sn-glycero-2,3-cyclic phosphate + ethanolamine. Dermonecrotic toxins cleave the phosphodiester linkage between the phosphate and headgroup of certain phospholipids (sphingolipid and lysolipid substrates), forming an alcohol (often choline) and a cyclic phosphate. This toxin acts on sphingomyelin (SM). It may also act on ceramide phosphoethanolamine (CPE), lysophosphatidylcholine (LPC) and lysophosphatidylethanolamine (LPE), but not on lysophosphatidylserine (LPS), and lysophosphatidylglycerol (LPG). It acts by transphosphatidylation, releasing exclusively cyclic phosphate products as second products. Induces dermonecrosis, hemolysis, increased vascular permeability, edema, inflammatory response, and platelet aggregation. This is Dermonecrotic toxin LspiSicTox-betaIII1 G from Loxosceles spinulosa (Recluse spider).